The following is a 543-amino-acid chain: Terpineol synthase, chloroplastic (543 aa).

The interval 1 to 22 is disordered; that stretch reads MNTEPSPNHYSAISSSDQNLTR. Residues arginine 263, aspartate 300, aspartate 304, arginine 435, and asparagine 438 each contribute to the (2E)-geranyl diphosphate site. Aspartate 300 and aspartate 304 together coordinate Mg(2+). Residues 300–304 carry the DDXXD motif motif; it reads DDVYD. Mg(2+)-binding residues include asparagine 438, threonine 442, and glutamate 446.

Belongs to the terpene synthase family. Tpsb subfamily. In terms of assembly, monomer. Mg(2+) serves as cofactor. Requires Mn(2+) as cofactor. In terms of tissue distribution, confined to flowers.

It localises to the plastid. The protein localises to the chloroplast. It carries out the reaction (2E)-geranyl diphosphate + H2O = (S)-alpha-terpineol + diphosphate. The catalysed reaction is (2E)-geranyl diphosphate = sabinene + diphosphate. It catalyses the reaction (2E)-geranyl diphosphate = beta-myrcene + diphosphate. The enzyme catalyses (2E)-geranyl diphosphate = limonene + diphosphate. It carries out the reaction (2E)-geranyl diphosphate + H2O = 1,8-cineole + diphosphate. It functions in the pathway secondary metabolite biosynthesis; terpenoid biosynthesis. In terms of biological role, monoterpene synthase (TPS) involved in the biosynthesis of monoterpene natural products of the 'cineole cassette', volatile compounds present in floral scent. Catalyzes the conversion of (2E)-geranyl diphosphate (GPP) into alpha-terpineol and, as minor products, sabinene, beta-myrcene, limonene and 1,8-cineole. This is Terpineol synthase, chloroplastic from Nicotiana alata (Winged tobacco).